The following is a 229-amino-acid chain: 7-cyano-7-deazaguanine synthase (229 aa).

An ATP-binding site is contributed by 7–17; that stretch reads LSGGLDSSTIL. Zn(2+) contacts are provided by Cys191, Cys199, Cys202, and Cys205.

The protein belongs to the QueC family. Zn(2+) serves as cofactor.

The catalysed reaction is 7-carboxy-7-deazaguanine + NH4(+) + ATP = 7-cyano-7-deazaguanine + ADP + phosphate + H2O + H(+). Its pathway is purine metabolism; 7-cyano-7-deazaguanine biosynthesis. Functionally, catalyzes the ATP-dependent conversion of 7-carboxy-7-deazaguanine (CDG) to 7-cyano-7-deazaguanine (preQ(0)). This is 7-cyano-7-deazaguanine synthase from Nostoc sp. (strain PCC 7120 / SAG 25.82 / UTEX 2576).